We begin with the raw amino-acid sequence, 719 residues long: Protein lin-15A (719 aa).

Disordered regions lie at residues 179–199 (FSHF…EGSQ), 419–464 (YRDH…SISW), 559–626 (LTTA…PTKT), and 684–719 (AKQV…EPIF). Residues 570–579 (STSTDSSSSS) are compositionally biased toward low complexity. The span at 604–617 (LLQNKPTHVESSSP) shows a compositional bias: polar residues. Over residues 693-719 (EPKHIPPTHMEKKPEELLMDPKPEPIF) the composition is skewed to basic and acidic residues.

Its subcellular location is the nucleus. Synthetic multivulva (synMuv) class A protein. SynMuv proteins are required to repress the induction of vulval development. Acts redundantly with SynMuv class B protein lin-15B, and lin-35 to negatively regulate vulval development, most likely through antagonization of the Ras-signaling pathway. May also negatively regulate vulval development in association with other SynMuv class B proteins such as dpl-1 and efl-1. Regulates let-23 basal activity. Required for the correct expression and/or stability of lin-56. This Caenorhabditis elegans protein is Protein lin-15A.